The following is a 376-amino-acid chain: Geranylgeranyl transferase type-1 subunit beta (376 aa).

4 PFTB repeats span residues 128–179, 192–231, 259–301, and 310–353; these read KRSL…YICG, TEKL…ALLS, MKFE…HLLT, and TELV…ALIE. Geranylgeranyl diphosphate is bound by residues 216 to 218 and 280 to 283; these read HSG and RENK. D286 and C288 together coordinate Zn(2+). Position 289 to 292 (289 to 292) interacts with geranylgeranyl diphosphate; it reads YAFW. H341 is a Zn(2+) binding site.

Belongs to the protein prenyltransferase subunit beta family. In terms of assembly, heterodimer of an alpha (RAM2) and a beta (CDC43) subunit. Zn(2+) serves as cofactor. Requires Mg(2+) as cofactor.

Its subcellular location is the cytoplasm. It carries out the reaction geranylgeranyl diphosphate + L-cysteinyl-[protein] = S-geranylgeranyl-L-cysteinyl-[protein] + diphosphate. In terms of biological role, catalyzes the transfer of a geranyl-geranyl moiety from geranyl-geranyl diphosphate to proteins having the C-terminal sequence Cys-Ile-Ile-Leu or Cys-Val-Leu-Leu. Acts, among other substrates, on Rho1 and Rho2 and CDC42 proteins. Participates in a RAS-like C-terminal modification of proteins involved in nuclear division and bud growth. It is involved in bud positioning and cell polarity. The beta subunit is responsible for isoprenoid and peptide-binding. This Saccharomyces cerevisiae (strain ATCC 204508 / S288c) (Baker's yeast) protein is Geranylgeranyl transferase type-1 subunit beta (CDC43).